Reading from the N-terminus, the 1207-residue chain is Chromosomal serine/threonine-protein kinase JIL-1 (1207 aa).

Positions 1–19 (MSRLQKQNYEILSGTSTSR) are enriched in polar residues. 3 disordered regions span residues 1–119 (MSRL…ASAR), 164–183 (QDME…SSSL), and 210–230 (SSST…LDLD). Phosphoserine is present on residues Ser-29 and Ser-31. Positions 45–69 (LNGQLVANGNGKTRKNSNSETMTNG) are enriched in polar residues. A compositionally biased stretch (low complexity) spans 88-97 (NYNNNNNNNN). Residues 98-108 (SISATNGQYTN) show a composition bias toward polar residues. Low complexity predominate over residues 109–118 (SSSKTTSASA). Positions 164-178 (QDMEEDEPNGIEIDE) are enriched in acidic residues. The span at 213-226 (TTPSYAMPTSNSTP) shows a compositional bias: polar residues. In terms of domain architecture, Protein kinase 1 spans 261–530 (FKIIRVLGTG…ASEIKEHPFF (270 aa)). Residues 267 to 275 (LGTGAYGRV) and Lys-293 contribute to the ATP site. The Proton acceptor role is filled by Asp-389. Phosphoserine is present on Ser-424. The 69-residue stretch at 531 to 599 (NGINWQELRT…VAPEHLEQMR (69 aa)) folds into the AGC-kinase C-terminal domain. Residue Thr-588 is modified to Phosphothreonine. One can recognise a Protein kinase 2 domain in the interval 623-886 (LELGTRTSNG…LSDILDSEWL (264 aa)). Residues 629-637 (TSNGAYGTC) and Lys-652 contribute to the ATP site. The Proton acceptor role is filled by Asp-739. Thr-1045 carries the post-translational modification Phosphothreonine. A Phosphoserine modification is found at Ser-1047. Positions 1168-1197 (TFPRPKAQLKRTKREPKVPRPPTRVQPERA) are disordered.

It belongs to the protein kinase superfamily. Ser/Thr protein kinase family. Interacts with lola. Interacts with proteins of the male specific lethal (MSL) dosage compensation complex; this interaction is mediated by the kinase domains. Mg(2+) serves as cofactor. Post-translationally, autophosphorylated in vitro.

It localises to the nucleus. The protein resides in the chromosome. It carries out the reaction L-seryl-[protein] + ATP = O-phospho-L-seryl-[protein] + ADP + H(+). The catalysed reaction is L-threonyl-[protein] + ATP = O-phospho-L-threonyl-[protein] + ADP + H(+). Functionally, phosphorylates 'Ser-10' of histone H3. May regulate gene expression by establishing or maintaining the structure of more open chromatin regions. Also required for normal polytene chromosome structure, for oogenesis and for viability throughout development. Regulates the structure of polytene chromosomes in salivary glands. May phosphorylate 'Ser-1' of histone H2A. This chain is Chromosomal serine/threonine-protein kinase JIL-1, found in Drosophila melanogaster (Fruit fly).